A 105-amino-acid polypeptide reads, in one-letter code: Multidrug resistance protein EbrA (105 aa).

4 consecutive transmembrane segments (helical) span residues 2-22, 35-55, 57-77, and 84-104; these read LIGY…AAML, ALVV…LNHI, LSLS…VIGV, and LNAK…LLNW.

This sequence belongs to the drug/metabolite transporter (DMT) superfamily. Small multidrug resistance (SMR) (TC 2.A.7.1) family. EbrA/EbrB subfamily. As to quaternary structure, the efflux pump is composed of EbrA and EbrB.

The protein localises to the cell membrane. In terms of biological role, part of a multidrug efflux pump. Confers resistance to cationic lipophilic dyes such as ethidium bromide, acriflavine, pyronine Y and safranin O. The efflux is probably coupled to an influx of protons. The polypeptide is Multidrug resistance protein EbrA (ebrA) (Bacillus subtilis (strain 168)).